A 484-amino-acid chain; its full sequence is MIQVLLVTICLAVFPYQGNSIILESGNVNDYEVVYPRKVTALPKGAVQPKYEDAMQYEFKVNGEPVVLHLEKNKGLFSEDYSETHYSPDGREITTYPSVEDHCYYHGRIQNDADLTASISACNGLKGYFKLQGETYLIEPLKLPDSEAHAVFKYENVEKEDEAPKMCGVTETNWESDEPIKKASQLNLTPDEQRFIELVIVADHRMYTKYDGDETEISSKIYEIANDLNVIFRALYIHVALIGLEIWPSGELCNVTLSADDTLDSFAEWTKRDLQKRKRHDNAQLLTGMIFNEKIEGRAYKKTMCHWKRSVGIVRDHRTRPHFVANRMAHGLGHNLGINHDGDSCTCGANSCIMSATVSNDPSSRFSDCSLNQYSSDIIHNPYTSRCLYNGPWKTDIVSPPVCGNYYVEVGEDCDCGPPANCQNRCCDAATCRLTPGSQCAEGLCCEQCRFSTEGKLCREAKGDWNNDYCSGQSGDCPRNPFRA.

A signal peptide spans 1–20; sequence MIQVLLVTICLAVFPYQGNS. Residues 21 to 192 constitute a propeptide that is removed on maturation; it reads IILESGNVND…ASQLNLTPDE (172 aa). Pyrrolidone carboxylic acid is present on glutamine 193. The Peptidase M12B domain maps to 194-392; it reads RFIELVIVAD…YTSRCLYNGP (199 aa). Glutamate 197 is a binding site for Ca(2+). Residue asparagine 254 is glycosylated (N-linked (GlcNAc...) asparagine). Aspartate 281 contacts Ca(2+). 3 disulfide bridges follow: cysteine 305-cysteine 387, cysteine 345-cysteine 369, and cysteine 347-cysteine 352. Histidine 330, histidine 334, and histidine 340 together coordinate Zn(2+). The Ca(2+) site is built by cysteine 387, asparagine 390, valine 402, asparagine 405, glutamate 409, glutamate 412, and aspartate 415. The Disintegrin domain occupies 400-484; it reads PPVCGNYYVE…GDCPRNPFRA (85 aa). Disulfide bonds link cysteine 403–cysteine 422, cysteine 414–cysteine 432, cysteine 416–cysteine 427, cysteine 426–cysteine 449, cysteine 440–cysteine 446, cysteine 445–cysteine 470, and cysteine 458–cysteine 477. The short motif at 462 to 464 is the Cell attachment site element; it reads KGD.

This sequence belongs to the venom metalloproteinase (M12B) family. P-II subfamily. P-IIb sub-subfamily. It depends on Zn(2+) as a cofactor. The N-terminus is blocked. Expressed by the venom gland.

It is found in the secreted. Snake venom zinc metalloproteinase that inhibits ADP-induced platelet aggregation in human platelet-rich plasma (IC(50) is 175 nM) and cleaves alpha-(FGA) and subsequently the beta-chain (FGG) of bovine fibrinogen, leaving the gamma-chain unaffected. It is also able to inhibit proliferatin of ECV304 cells by inducing apoptosis of these cells. This chain is Zinc metalloproteinase-disintegrin stejnitin, found in Trimeresurus stejnegeri (Chinese green tree viper).